The sequence spans 250 residues: HTH-type transcriptional regulator SarS (250 aa).

2 DNA-binding regions (H-T-H motif) span residues 53–76 (FKKI…VLVK) and 177–200 (LKDL…NLKK).

The protein belongs to the SarA family.

The protein localises to the cytoplasm. Its function is as follows. Transcriptional regulator that controls expression of some virulence factors in a cell density-dependent manner. The polypeptide is HTH-type transcriptional regulator SarS (sarS) (Staphylococcus aureus (strain Mu3 / ATCC 700698)).